Reading from the N-terminus, the 262-residue chain is Acyl-[acyl-carrier-protein]--UDP-N-acetylglucosamine O-acyltransferase (262 aa).

It belongs to the transferase hexapeptide repeat family. LpxA subfamily. As to quaternary structure, homotrimer.

The protein localises to the cytoplasm. The enzyme catalyses a (3R)-hydroxyacyl-[ACP] + UDP-N-acetyl-alpha-D-glucosamine = a UDP-3-O-[(3R)-3-hydroxyacyl]-N-acetyl-alpha-D-glucosamine + holo-[ACP]. It functions in the pathway glycolipid biosynthesis; lipid IV(A) biosynthesis; lipid IV(A) from (3R)-3-hydroxytetradecanoyl-[acyl-carrier-protein] and UDP-N-acetyl-alpha-D-glucosamine: step 1/6. Functionally, involved in the biosynthesis of lipid A, a phosphorylated glycolipid that anchors the lipopolysaccharide to the outer membrane of the cell. The chain is Acyl-[acyl-carrier-protein]--UDP-N-acetylglucosamine O-acyltransferase from Erwinia tasmaniensis (strain DSM 17950 / CFBP 7177 / CIP 109463 / NCPPB 4357 / Et1/99).